We begin with the raw amino-acid sequence, 229 residues long: Transmembrane emp24 domain-containing protein 5 (229 aa).

The signal sequence occupies residues 1 to 27 (MGDKIWLPFPVLLLAALPPVLLPGAAG). The Lumenal segment spans residues 28–196 (FTPSLDSDFT…IQESNFDRVN (169 aa)). Residues 45–126 (KECFYQPMPL…EKVIFFELIL (82 aa)) enclose the GOLD domain. Residues 197-217 (FWSMVNLVVMVVVSAIQVYML) traverse the membrane as a helical segment. The Cytoplasmic segment spans residues 218 to 229 (KSLFEDKRKSRT).

This sequence belongs to the EMP24/GP25L family. Interacts with TMED9 and TMED10.

It localises to the endoplasmic reticulum membrane. Its subcellular location is the golgi apparatus. The protein resides in the cis-Golgi network membrane. It is found in the endoplasmic reticulum-Golgi intermediate compartment membrane. Its function is as follows. Potential role in vesicular protein trafficking, mainly in the early secretory pathway. Required for the maintenance of the Golgi apparatus; involved in protein exchange between Golgi stacks during assembly. Probably not required for COPI-vesicle-mediated retrograde transport. The chain is Transmembrane emp24 domain-containing protein 5 (TMED5) from Homo sapiens (Human).